Here is a 126-residue protein sequence, read N- to C-terminus: Aspartate 1-decarboxylase (126 aa).

Ser25 acts as the Schiff-base intermediate with substrate; via pyruvic acid in catalysis. A Pyruvic acid (Ser) modification is found at Ser25. Residue Thr57 participates in substrate binding. The Proton donor role is filled by Tyr58. 73–75 (GAA) lines the substrate pocket.

This sequence belongs to the PanD family. In terms of assembly, heterooctamer of four alpha and four beta subunits. Pyruvate serves as cofactor. In terms of processing, is synthesized initially as an inactive proenzyme, which is activated by self-cleavage at a specific serine bond to produce a beta-subunit with a hydroxyl group at its C-terminus and an alpha-subunit with a pyruvoyl group at its N-terminus.

It is found in the cytoplasm. It catalyses the reaction L-aspartate + H(+) = beta-alanine + CO2. It functions in the pathway cofactor biosynthesis; (R)-pantothenate biosynthesis; beta-alanine from L-aspartate: step 1/1. Catalyzes the pyruvoyl-dependent decarboxylation of aspartate to produce beta-alanine. This chain is Aspartate 1-decarboxylase, found in Psychrobacter arcticus (strain DSM 17307 / VKM B-2377 / 273-4).